Consider the following 238-residue polypeptide: Small ribosomal subunit protein uS2 (238 aa).

Belongs to the universal ribosomal protein uS2 family.

The chain is Small ribosomal subunit protein uS2 from Chloroflexus aggregans (strain MD-66 / DSM 9485).